Consider the following 297-residue polypeptide: Acetylglutamate kinase (297 aa).

Residues 73-74, R95, and N188 each bind substrate; that span reads GG.

It belongs to the acetylglutamate kinase family. ArgB subfamily.

It is found in the cytoplasm. It carries out the reaction N-acetyl-L-glutamate + ATP = N-acetyl-L-glutamyl 5-phosphate + ADP. It functions in the pathway amino-acid biosynthesis; L-arginine biosynthesis; N(2)-acetyl-L-ornithine from L-glutamate: step 2/4. Functionally, catalyzes the ATP-dependent phosphorylation of N-acetyl-L-glutamate. The polypeptide is Acetylglutamate kinase (Nostoc sp. (strain PCC 7120 / SAG 25.82 / UTEX 2576)).